The chain runs to 537 residues: Tyrosine-protein kinase Fyn (537 aa).

G2 is lipidated: N-myristoyl glycine. S-palmitoyl cysteine attachment occurs at residues C3 and C6. At T12 the chain carries Phosphothreonine; by PKC. Residues 14-35 (LTEERDGSLNQSSGYRYGTDPT) form a disordered region. Phosphoserine occurs at positions 21 and 26. Residues 82–143 (TGVTLFVALY…PSNYVAPVDS (62 aa)) enclose the SH3 domain. One can recognise an SH2 domain in the interval 149–246 (WYFGKLGRKD…GLCCRLVVPC (98 aa)). Y185 bears the Phosphotyrosine mark. The region spanning 271-524 (LQLIKRLGNG…YLQSFLEDYF (254 aa)) is the Protein kinase domain. ATP contacts are provided by residues 277-285 (LGNGQFGEV) and K299. D390 functions as the Proton acceptor in the catalytic mechanism. Y420 carries the post-translational modification Phosphotyrosine; by autocatalysis. Y531 bears the Phosphotyrosine; by CSK mark.

The protein belongs to the protein kinase superfamily. Tyr protein kinase family. SRC subfamily. As to quaternary structure, interacts (via its SH3 domain) with PIK3R1 and PRMT8. Interacts with FYB1, PAG1, and SH2D1A. Interacts with CD79A (tyrosine-phosphorylated form); the interaction increases FYN activity. Interacts (via SH2 domain) with CSF1R (tyrosine phosphorylated). Interacts with TOM1L1 (phosphorylated form). Interacts with KDR (tyrosine phosphorylated). Interacts (via SH3 domain) with KLHL2 (via N-terminus). Interacts with SH2D1A and SLAMF1. Interacts with ITCH; the interaction phosphorylates ITCH and negatively regulates its activity. Interacts with FASLG. Interacts with RUNX3. Interacts with KIT. Interacts with EPHA8; possible downstream effector of EPHA8 in regulation of cell adhesion. Interacts with PTK2/FAK1; this interaction leads to PTK2/FAK1 phosphorylation and activation. Interacts with CAV1; this interaction couples integrins to the Ras-ERK pathway. Interacts with UNC119. Interacts (via SH2 domain) with PTPRH (phosphorylated form). Interacts with PTPRO (phosphorylated form). Interacts with PTPRB (phosphorylated form). Interacts with FYB2. Interacts with DSCAM. Interacts with SKAP1 and FYB1; this interaction promotes the phosphorylation of CLNK. Interacts with NEDD9; in the presence of PTK2. In terms of assembly, (Microbial infection) Interacts (via its SH3 domain) with hepatitis E virus/HEV protein ORF3. The cofactor is Mn(2+). In terms of processing, autophosphorylated at Tyr-420. Phosphorylation on the C-terminal tail at Tyr-531 by CSK maintains the enzyme in an inactive state. PTPRC/CD45 dephosphorylates Tyr-531 leading to activation. Ultraviolet B (UVB) strongly increase phosphorylation at Thr-12 and kinase activity, and promotes translocation from the cytoplasm to the nucleus. Dephosphorylation at Tyr-420 by PTPN2 negatively regulates T-cell receptor signaling. Phosphorylated at tyrosine residues, which can be enhanced by NTN1. Post-translationally, palmitoylated. Palmitoylation at Cys-3 and Cys-6, probably by ZDHHC21, regulates subcellular location. In terms of tissue distribution, isoform 1 is highly expressed in the brain. Isoform 2 is expressed in cells of hemopoietic lineages, especially T-lymphocytes.

Its subcellular location is the cytoplasm. The protein localises to the nucleus. It localises to the cell membrane. The protein resides in the perikaryon. It catalyses the reaction L-tyrosyl-[protein] + ATP = O-phospho-L-tyrosyl-[protein] + ADP + H(+). Inhibited by phosphorylation of Tyr-531 by leukocyte common antigen and activated by dephosphorylation of this site. Non-receptor tyrosine-protein kinase that plays a role in many biological processes including regulation of cell growth and survival, cell adhesion, integrin-mediated signaling, cytoskeletal remodeling, cell motility, immune response and axon guidance. Inactive FYN is phosphorylated on its C-terminal tail within the catalytic domain. Following activation by PKA, the protein subsequently associates with PTK2/FAK1, allowing PTK2/FAK1 phosphorylation, activation and targeting to focal adhesions. Involved in the regulation of cell adhesion and motility through phosphorylation of CTNNB1 (beta-catenin) and CTNND1 (delta-catenin). Regulates cytoskeletal remodeling by phosphorylating several proteins including the actin regulator WAS and the microtubule-associated proteins MAP2 and MAPT. Promotes cell survival by phosphorylating AGAP2/PIKE-A and preventing its apoptotic cleavage. Participates in signal transduction pathways that regulate the integrity of the glomerular slit diaphragm (an essential part of the glomerular filter of the kidney) by phosphorylating several slit diaphragm components including NPHS1, KIRREL1 and TRPC6. Plays a role in neural processes by phosphorylating DPYSL2, a multifunctional adapter protein within the central nervous system, ARHGAP32, a regulator for Rho family GTPases implicated in various neural functions, and SNCA, a small pre-synaptic protein. Involved in reelin signaling by mediating phosphorylation of DAB1 following reelin (RELN)-binding to its receptor. Participates in the downstream signaling pathways that lead to T-cell differentiation and proliferation following T-cell receptor (TCR) stimulation. Phosphorylates PTK2B/PYK2 in response to T-cell receptor activation. Also participates in negative feedback regulation of TCR signaling through phosphorylation of PAG1, thereby promoting interaction between PAG1 and CSK and recruitment of CSK to lipid rafts. CSK maintains LCK and FYN in an inactive form. Promotes CD28-induced phosphorylation of VAV1. In mast cells, phosphorylates CLNK after activation of immunoglobulin epsilon receptor signaling. Can also promote CD244-mediated NK cell activation. The protein is Tyrosine-protein kinase Fyn (FYN) of Homo sapiens (Human).